A 499-amino-acid polypeptide reads, in one-letter code: Glutamate--tRNA ligase (499 aa).

A 'HIGH' region motif is present at residues 12–22; the sequence is PSPTGHLHIGN. Residues 259-263 carry the 'KMSKS' region motif; sequence KLSKR. K262 provides a ligand contact to ATP.

Belongs to the class-I aminoacyl-tRNA synthetase family. Glutamate--tRNA ligase type 1 subfamily. In terms of assembly, monomer.

It is found in the cytoplasm. It carries out the reaction tRNA(Glu) + L-glutamate + ATP = L-glutamyl-tRNA(Glu) + AMP + diphosphate. Catalyzes the attachment of glutamate to tRNA(Glu) in a two-step reaction: glutamate is first activated by ATP to form Glu-AMP and then transferred to the acceptor end of tRNA(Glu). This is Glutamate--tRNA ligase from Lactobacillus gasseri (strain ATCC 33323 / DSM 20243 / BCRC 14619 / CIP 102991 / JCM 1131 / KCTC 3163 / NCIMB 11718 / NCTC 13722 / AM63).